The chain runs to 432 residues: SVP1-like protein 2 (432 aa).

2 WD repeats span residues 223-263 and 268-307; these read AHKS…LLYE and LDRAIVTSMKFSHDDSKLAVLSDKNTLHVYNVSPLNTSSG.

Belongs to the WD repeat PROPPIN family.

It is found in the vacuole membrane. The protein resides in the cytoplasmic vesicle membrane. Involved in mitochondrial or peroxisomal functions and amino acid signaling pathways. This is SVP1-like protein 2 (HSV2) from Debaryomyces hansenii (strain ATCC 36239 / CBS 767 / BCRC 21394 / JCM 1990 / NBRC 0083 / IGC 2968) (Yeast).